The sequence spans 480 residues: Endothelial transcription factor GATA-2 (480 aa).

Ser73 carries the post-translational modification Phosphoserine. Arg86 carries the asymmetric dimethylarginine modification. A disordered region spans residues 166–208; it reads SGSHLFGFPPTPPKEVSPDPSTTGAASPASPSAGGSVARGEDK. Positions 183–201 are enriched in low complexity; the sequence is PDPSTTGAASPASPSAGGS. Phosphoserine is present on Ser192. 2 consecutive GATA-type zinc fingers follow at residues 295-319 and 349-373; these read CVNC…CNAC and CANC…CNAC. Lys389 participates in a covalent cross-link: Glycyl lysine isopeptide (Lys-Gly) (interchain with G-Cter in SUMO2). Positions 457-480 are disordered; it reads TPIHPSSSLSFGHPHPSSMVTAMG.

In terms of assembly, interacts with BRD3. Interacts with AR and CCAR1. Interacts with MDFIC.

The protein resides in the nucleus. Transcriptional activator which regulates endothelin-1 gene expression in endothelial cells. Binds to the consensus sequence 5'-AGATAG-3'. Plays an important role in the regulation of phagocytosis in alveolar macrophages, particularly during P.carinii infection. The sequence is that of Endothelial transcription factor GATA-2 from Rattus norvegicus (Rat).